The following is a 255-amino-acid chain: 14-3-3-like protein B (255 aa).

It belongs to the 14-3-3 family.

In Nicotiana tabacum (Common tobacco), this protein is 14-3-3-like protein B.